The primary structure comprises 215 residues: 3-demethoxyubiquinol 3-hydroxylase (215 aa).

Fe cation contacts are provided by Glu-64, Glu-94, His-97, Glu-146, Glu-178, and His-181.

Belongs to the COQ7 family. Fe cation serves as cofactor.

The protein resides in the cell membrane. It catalyses the reaction a 5-methoxy-2-methyl-3-(all-trans-polyprenyl)benzene-1,4-diol + AH2 + O2 = a 3-demethylubiquinol + A + H2O. It functions in the pathway cofactor biosynthesis; ubiquinone biosynthesis. In terms of biological role, catalyzes the hydroxylation of 2-nonaprenyl-3-methyl-6-methoxy-1,4-benzoquinol during ubiquinone biosynthesis. The sequence is that of 3-demethoxyubiquinol 3-hydroxylase from Coxiella burnetii (strain CbuG_Q212) (Coxiella burnetii (strain Q212)).